Reading from the N-terminus, the 350-residue chain is Induced myeloid leukemia cell differentiation protein Mcl-1 homolog (350 aa).

Residues K5 and K40 each participate in a glycyl lysine isopeptide (Lys-Gly) (interchain with G-Cter in ubiquitin) cross-link. The tract at residues 104–175 is PEST-like; the sequence is CASPPEEMEG…PAEEEEDELF (72 aa). At S121 the chain carries Phosphoserine. K136 is covalently cross-linked (Glycyl lysine isopeptide (Lys-Gly) (interchain with G-Cter in ubiquitin)). Residues 148-170 are disordered; the sequence is GEASSGPGTDGSLPSTPPPAEEE. Position 159 is a phosphoserine; by GSK3-alpha and GSK3-beta (S159). Residue S162 is modified to Phosphoserine. At T163 the chain carries Phosphothreonine; by MAPK. Glycyl lysine isopeptide (Lys-Gly) (interchain with G-Cter in ubiquitin) cross-links involve residues K194 and K197. Positions 209-223 match the BH3 motif; that stretch reads ALETLRRVGDGVQRN. Residues 252–272 carry the BH1 motif; the sequence is HVFSDGVTNWGRIVTLISFGA. Positions 304–319 match the BH2 motif; the sequence is DWLVKQRGWDGFVEFF. Residues 328-348 traverse the membrane as a helical segment; the sequence is IRNVLLAFAGVAGVGAGLAYL.

This sequence belongs to the Bcl-2 family. Interacts with HIF3A (via C-terminus domain). Interacts with BOK, BIK, BAX, BAK1, and TPT1. Interacts with unphosphorylated BAD. Interacts with BMF, BBC3 and PMAIP1. Interacts with BOP. Interacts with BCL2L11; may sequester BCL2L11 to prevent its pro-apoptotic activity. Interacts with GIMAP5 and HSPA8/HSC70; the interaction between HSPA8 and MCL1 is impaired in the absence of GIMAP5. Post-translationally, cleaved by CASP3 during apoptosis, yielding a pro-apoptotic C-terminal fragment. In terms of processing, rapidly degraded in the absence of phosphorylation in the PEST region. Phosphorylated on Ser-159, by GSK3, in response to IL3/interleukin-3 withdrawal. Phosphorylation at Ser-159 induces ubiquitination and proteasomal degradation, abrogating the anti-apoptotic activity. Treatment with taxol or okadaic acid induces phosphorylation on additional sites. Post-translationally, ubiquitinated. Ubiquitination is induced by phosphorylation at Ser-159. Deubiquitinated by USP20; leading to increased stability.

It is found in the membrane. The protein resides in the cytoplasm. The protein localises to the mitochondrion. It localises to the nucleus. Its subcellular location is the nucleoplasm. In terms of biological role, involved in the regulation of apoptosis versus cell survival, and in the maintenance of viability but not of proliferation. Mediates its effects by interactions with a number of other regulators of apoptosis. In Felis catus (Cat), this protein is Induced myeloid leukemia cell differentiation protein Mcl-1 homolog (MCL1).